A 312-amino-acid polypeptide reads, in one-letter code: Src-like-adapter (312 aa).

The segment at 1–33 is disordered; sequence MLCRLPGPSTSRGEKEMGNSMKSTPAPLERPLS. The SH3 domain maps to 38 to 98; that stretch reads LESDFLAVLN…PGICVARVYH (61 aa). The SH2 domain occupies 100–191; sequence WLFEGLGRDK…GLCCVLTTPC (92 aa). The segment at 206 to 312 is SLA C-terminal; that stretch reads CTSPGSPVTL…TQKTKALTAT (107 aa). Phosphoserine is present on S274.

Homodimer. Interacts with phosphorylated CBL, SYK and LAT. Homodimerization and interaction with phosphorylated CBL occurs via its C-terminal domain. Interacts with PDGFRB and EPHA2. Interacts with phosphorylated proteins ZAP70; CD3Z; VAV1 and LCP2 via its SH2 domain. Post-translationally, phosphorylated.

The protein resides in the cytoplasm. Its subcellular location is the endosome. In terms of biological role, adapter protein, which negatively regulates T-cell receptor (TCR) signaling. Inhibits T-cell antigen-receptor induced activation of nuclear factor of activated T-cells. Involved in the negative regulation of positive selection and mitosis of T-cells. May act by linking signaling proteins such as ZAP70 with CBL, leading to a CBL dependent degradation of signaling proteins. This chain is Src-like-adapter (Sla), found in Rattus norvegicus (Rat).